Consider the following 641-residue polypeptide: Threonine--tRNA ligase (641 aa).

One can recognise a TGS domain in the interval 1 to 61 (MPIITLPDGT…TQNSHIQIIT (61 aa)). Residues 242–533 (DHRKLGKKYS…LIENYSGNFP (292 aa)) form a catalytic region. Cysteine 333, histidine 384, and histidine 510 together coordinate Zn(2+).

This sequence belongs to the class-II aminoacyl-tRNA synthetase family. As to quaternary structure, homodimer. It depends on Zn(2+) as a cofactor.

The protein localises to the cytoplasm. The enzyme catalyses tRNA(Thr) + L-threonine + ATP = L-threonyl-tRNA(Thr) + AMP + diphosphate + H(+). Catalyzes the attachment of threonine to tRNA(Thr) in a two-step reaction: L-threonine is first activated by ATP to form Thr-AMP and then transferred to the acceptor end of tRNA(Thr). Also edits incorrectly charged L-seryl-tRNA(Thr). This is Threonine--tRNA ligase from Prochlorococcus marinus (strain NATL2A).